The primary structure comprises 482 residues: Putative transposase R186 (482 aa).

Zn(2+)-binding residues include C416, C419, C433, and C435.

The protein in the central section; belongs to the transposase 2 family. This sequence in the C-terminal section; belongs to the transposase 35 family.

In Acanthamoeba polyphaga (Amoeba), this protein is Putative transposase R186.